We begin with the raw amino-acid sequence, 320 residues long: Porphobilinogen deaminase (320 aa).

S-(dipyrrolylmethanemethyl)cysteine is present on Cys241.

This sequence belongs to the HMBS family. As to quaternary structure, monomer. It depends on dipyrromethane as a cofactor.

The enzyme catalyses 4 porphobilinogen + H2O = hydroxymethylbilane + 4 NH4(+). Its pathway is porphyrin-containing compound metabolism; protoporphyrin-IX biosynthesis; coproporphyrinogen-III from 5-aminolevulinate: step 2/4. Functionally, tetrapolymerization of the monopyrrole PBG into the hydroxymethylbilane pre-uroporphyrinogen in several discrete steps. In Thermobifida fusca (strain YX), this protein is Porphobilinogen deaminase.